The following is a 344-amino-acid chain: Geranylgeranyl pyrophosphate synthase 10, mitochondrial (344 aa).

Residues 1–40 constitute a mitochondrion transit peptide; sequence MENREVFVYIVISIFRSLQFLFWRFRPRYNDVTSALTRPL. The isopentenyl diphosphate site is built by K91, R94, and H123. Residues D130 and D136 each contribute to the Mg(2+) site. R141 provides a ligand contact to dimethylallyl diphosphate. R142 lines the isopentenyl diphosphate pocket. Residues K229, T230, Q267, K284, and K294 each contribute to the dimethylallyl diphosphate site.

It belongs to the FPP/GGPP synthase family. Monomer. Mg(2+) is required as a cofactor.

Its subcellular location is the mitochondrion. It carries out the reaction isopentenyl diphosphate + dimethylallyl diphosphate = (2E)-geranyl diphosphate + diphosphate. The enzyme catalyses isopentenyl diphosphate + (2E)-geranyl diphosphate = (2E,6E)-farnesyl diphosphate + diphosphate. It catalyses the reaction isopentenyl diphosphate + (2E,6E)-farnesyl diphosphate = (2E,6E,10E)-geranylgeranyl diphosphate + diphosphate. It participates in isoprenoid biosynthesis; farnesyl diphosphate biosynthesis; farnesyl diphosphate from geranyl diphosphate and isopentenyl diphosphate: step 1/1. The protein operates within isoprenoid biosynthesis; geranyl diphosphate biosynthesis; geranyl diphosphate from dimethylallyl diphosphate and isopentenyl diphosphate: step 1/1. Its pathway is isoprenoid biosynthesis; geranylgeranyl diphosphate biosynthesis; geranylgeranyl diphosphate from farnesyl diphosphate and isopentenyl diphosphate: step 1/1. In terms of biological role, catalyzes the trans-addition of the three molecules of IPP onto DMAPP to form geranylgeranyl pyrophosphate. The protein is Geranylgeranyl pyrophosphate synthase 10, mitochondrial of Arabidopsis thaliana (Mouse-ear cress).